A 632-amino-acid chain; its full sequence is Golgin subfamily A member 8H (632 aa).

Positions 1–77 (MAEETQHNKL…SSATLKDLES (77 aa)) are disordered. Coiled-coil stretches lie at residues 110–201 (VEHQ…LSSR) and 240–468 (ECAE…EKAD). 2 stretches are compositionally biased toward basic and acidic residues: residues 352–362 (KQEERIQEQHK) and 427–440 (HGGE…EEAP). Disordered stretches follow at residues 352-379 (KQEE…EPNN), 423-452 (PGEG…DPES), and 496-524 (LSEP…DEGE). The segment covering 508–520 (LGGGHHQAGAQGG) has biased composition (gly residues).

Belongs to the GOLGA8 family.

This is Golgin subfamily A member 8H (GOLGA8H) from Homo sapiens (Human).